The sequence spans 558 residues: Potassium-transporting ATPase potassium-binding subunit (558 aa).

12 helical membrane passes run 1-21 (MEII…SGYL), 66-86 (FNGF…WLFL), 127-147 (MIVM…VCIA), 166-186 (IVRF…ILLM), 245-265 (IWSD…MLFL), 281-301 (ALIL…LTMW), 327-347 (FGAG…TGSV), 354-374 (LTPL…VFGG), 377-397 (VGLM…SLMV), 416-436 (IVLV…LAFM), 482-502 (ISTG…QLLI), and 531-551 (IVFI…LGPI).

The protein belongs to the KdpA family. In terms of assembly, the system is composed of three essential subunits: KdpA, KdpB and KdpC.

The protein localises to the cell membrane. In terms of biological role, part of the high-affinity ATP-driven potassium transport (or Kdp) system, which catalyzes the hydrolysis of ATP coupled with the electrogenic transport of potassium into the cytoplasm. This subunit binds the extracellular potassium ions and delivers the ions to the membrane domain of KdpB through an intramembrane tunnel. This Staphylococcus aureus (strain bovine RF122 / ET3-1) protein is Potassium-transporting ATPase potassium-binding subunit.